The sequence spans 509 residues: Histidine--tRNA ligase, cytoplasmic (509 aa).

Alanine 2 carries the N-acetylalanine modification. One can recognise a WHEP-TRS domain in the interval 3–59; that stretch reads ERAALEELVKLQGERVRGLKQQKASAELIEEEVAKLLKLKAQLGPDESKQKFVLKTP. At serine 66 the chain carries Phosphoserine. L-histidine contacts are provided by residues 130–132, arginine 157, glutamine 173, aspartate 177, arginine 326, and 330–331; these read DLT and YY. The residue at position 356 (serine 356) is a Phosphoserine.

This sequence belongs to the class-II aminoacyl-tRNA synthetase family. In terms of assembly, homodimer. As to expression, brain, heart, liver and kidney.

The protein resides in the cytoplasm. It catalyses the reaction tRNA(His) + L-histidine + ATP = L-histidyl-tRNA(His) + AMP + diphosphate + H(+). Catalyzes the ATP-dependent ligation of histidine to the 3'-end of its cognate tRNA, via the formation of an aminoacyl-adenylate intermediate (His-AMP). Plays a role in axon guidance. This Homo sapiens (Human) protein is Histidine--tRNA ligase, cytoplasmic.